Here is a 222-residue protein sequence, read N- to C-terminus: UPF0502 protein Lcho_2066 (222 aa).

Belongs to the UPF0502 family.

This chain is UPF0502 protein Lcho_2066, found in Leptothrix cholodnii (strain ATCC 51168 / LMG 8142 / SP-6) (Leptothrix discophora (strain SP-6)).